A 374-amino-acid polypeptide reads, in one-letter code: 3-isopropylmalate dehydrogenase (374 aa).

83–96 (GPKWDNLPPEIRPE) is a binding site for NAD(+). 4 residues coordinate substrate: Arg-104, Arg-114, Arg-142, and Asp-231. Asp-231, Asp-255, and Asp-259 together coordinate Mg(2+). 288 to 300 (GSAPDIAGQNKAN) contacts NAD(+).

It belongs to the isocitrate and isopropylmalate dehydrogenases family. LeuB type 1 subfamily. Homodimer. It depends on Mg(2+) as a cofactor. Mn(2+) is required as a cofactor.

The protein resides in the cytoplasm. The enzyme catalyses (2R,3S)-3-isopropylmalate + NAD(+) = 4-methyl-2-oxopentanoate + CO2 + NADH. It functions in the pathway amino-acid biosynthesis; L-leucine biosynthesis; L-leucine from 3-methyl-2-oxobutanoate: step 3/4. In terms of biological role, catalyzes the oxidation of 3-carboxy-2-hydroxy-4-methylpentanoate (3-isopropylmalate) to 3-carboxy-4-methyl-2-oxopentanoate. The product decarboxylates to 4-methyl-2 oxopentanoate. This is 3-isopropylmalate dehydrogenase from Carboxydothermus hydrogenoformans (strain ATCC BAA-161 / DSM 6008 / Z-2901).